The primary structure comprises 107 residues: Phosphoribosyl-ATP pyrophosphatase (107 aa).

This sequence belongs to the PRA-PH family.

It localises to the cytoplasm. It catalyses the reaction 1-(5-phospho-beta-D-ribosyl)-ATP + H2O = 1-(5-phospho-beta-D-ribosyl)-5'-AMP + diphosphate + H(+). It participates in amino-acid biosynthesis; L-histidine biosynthesis; L-histidine from 5-phospho-alpha-D-ribose 1-diphosphate: step 2/9. The protein is Phosphoribosyl-ATP pyrophosphatase of Methylobacterium radiotolerans (strain ATCC 27329 / DSM 1819 / JCM 2831 / NBRC 15690 / NCIMB 10815 / 0-1).